The sequence spans 269 residues: uncharacterized protein (269 aa).

The 46-residue stretch at 152-197 (RYFSKPAYRNAFKANTIRATTAYKKVFNDPSLGSTYPLEVPLGKMS) folds into the RPE1 insert domain.

This is an uncharacterized protein from Rickettsia prowazekii (strain Madrid E).